The primary structure comprises 356 residues: Zinc finger CW-type PWWP domain protein 2 (356 aa).

The CW-type zinc finger occupies 24-79; sequence MYVNKVWVQCENENCLKWRLLSSEDSAKVDHDEPWYCFMNTDSRYNNCSISEEDFP. Zn(2+) contacts are provided by Cys33, Cys38, Cys60, and Cys71. Residues 98–162 enclose the PWWP domain; the sequence is LGSLVLVKLQ…ATFVGHYSIT (65 aa). Positions 279–307 are disordered; the sequence is QALQPTATPDESEEGHGEEINMGEKLSKC.

Functionally, histone methylation reader which binds to non-methylated (H3K4me0), monomethylated (H3K4me1), dimethylated (H3K4me2) and trimethylated (H3K4me3) 'Lys-4' on histone H3. The order of binding preference is H3K4me3 &gt; H3K4me2 &gt; H3K4me1 &gt; H3K4me0. In Homo sapiens (Human), this protein is Zinc finger CW-type PWWP domain protein 2 (ZCWPW2).